The chain runs to 240 residues: MEEKPKYKRILLKLSGEAFAGEQGYGIDPAFLEYISHEIKNVYDLGVQVAIVIGGGNIFRGFQGKEIGVDRATADYMGMLATVINALALQSALENHVNIPTRVLSAIEMRQVAEPYIRRRAIRHLEKGRIVIFAGGTGNPFFSTDTAAALRAAEIGAEVLIKATKVGGIYDKDPEKYPDAVLIKEISYLEVINMGLKVMDHTALTLCKENEIPIIVLNVKEKGNLRRAVLGEEVGSVVRG.

Position 13–16 (13–16) interacts with ATP; sequence KLSG. The segment at 21 to 26 is involved in allosteric activation by GTP; sequence GEQGYG. UMP is bound at residue G55. ATP-binding residues include G56 and R60. UMP is bound by residues D75 and 137–144; that span reads TGNPFFST. T164, Y170, and D173 together coordinate ATP.

Belongs to the UMP kinase family. In terms of assembly, homohexamer.

The protein resides in the cytoplasm. The catalysed reaction is UMP + ATP = UDP + ADP. It functions in the pathway pyrimidine metabolism; CTP biosynthesis via de novo pathway; UDP from UMP (UMPK route): step 1/1. With respect to regulation, allosterically activated by GTP. Inhibited by UTP. Its function is as follows. Catalyzes the reversible phosphorylation of UMP to UDP. The polypeptide is Uridylate kinase (Aquifex aeolicus (strain VF5)).